The following is a 618-amino-acid chain: Matrix metalloproteinase-24 (618 aa).

A signal peptide spans 1–41 (MPRSRGGRAAPGQASRWSGWRAPGRLLPLLPALCCLAAAAG). The propeptide occupies 42-128 (AGKPAGADAP…HLSRRRRNKR (87 aa)). Residues 42 to 575 (AGKPAGADAP…IDDVPGSVNA (534 aa)) lie on the Extracellular side of the membrane. The Cysteine switch signature appears at 110 to 117 (PRCGVPDH). Cys112 and His255 together coordinate Zn(2+). Glu256 is a catalytic residue. Zn(2+) is bound by residues His259 and His265. Positions 296 to 352 (QKIYGPPAEPLEPTRPLPTLPVRRIHSPSERKHERHPRPPRPPLGDRPSTPGAKPNI) are disordered. Residues 302–314 (PAEPLEPTRPLPT) are compositionally biased toward pro residues. Hemopexin repeat units lie at residues 350-398 (PNIC…WKGL), 399-444 (PARI…GSCL), 446-494 (REGI…KGIP), and 495-542 (QAPQ…WMGC). Cys353 and Cys542 are joined by a disulfide. Residues 576-596 (VAVVVPCTLSLCLLVLLYTIF) traverse the membrane as a helical segment. Residues 597 to 618 (QFKNKAGPQPVTYYKRPVQEWV) are Cytoplasmic-facing. A PDZ-binding motif is present at residues 616–618 (EWV).

It belongs to the peptidase M10A family. As to quaternary structure, interacts with GRIP1 and GRIP2. Interacts (via PDZ-binding motif) with APBA3 (via PDZ domain). The cofactor is Zn(2+). Requires Ca(2+) as cofactor. Cleaved by a furin endopeptidase in the trans-Golgi network. Mainly expressed in neuronal cells of both central and peripheral nervous systems. Expressed by CGRP-containing peptidergic nociceptors in dorsal root ganglia. Expressed in adult neural stem cell and ependymocytes. Expressed at low level in testis.

The protein localises to the cell membrane. It localises to the golgi apparatus. The protein resides in the trans-Golgi network membrane. It is found in the secreted. Its subcellular location is the extracellular space. The protein localises to the extracellular matrix. Functionally, metalloprotease that mediates cleavage of N-cadherin (CDH2) and acts as a regulator of neuro-immune interactions and neural stem cell quiescence. Involved in cell-cell interactions between nociceptive neurites and mast cells, possibly by mediating cleavage of CDH2, thereby acting as a mediator of peripheral thermal nociception and inflammatory hyperalgesia. Key regulator of neural stem cells quiescence by mediating cleavage of CDH2, affecting CDH2-mediated anchorage of neural stem cells to ependymocytes in the adult subependymal zone, leading to modulate their quiescence. May play a role in axonal growth. Able to activate progelatinase A. May also be a proteoglycanase involved in degradation of proteoglycans, such as dermatan sulfate and chondroitin sulfate proteoglycans. Cleaves partially fibronectin, but not collagen type I, nor laminin. The protein is Matrix metalloproteinase-24 (Mmp24) of Mus musculus (Mouse).